The chain runs to 338 residues: Increasing suppression factor 1 (338 aa).

Residues 50-70 are compositionally biased toward low complexity; sequence ENSSKSNNSHHSSSTNAGNTS. Residues 50 to 72 form a disordered region; the sequence is ENSSKSNNSHHSSSTNAGNTSRH. Phosphoserine is present on S119. Positions 267-306 are enriched in low complexity; it reads SLLSNGSSSSPLQTRNNSYSNSLVKSPSNSSLNTSVASSN. The interval 267–322 is disordered; sequence SLLSNGSSSSPLQTRNNSYSNSLVKSPSNSSLNTSVASSNEESSPHTSNCLEERNP. Over residues 307–316 the composition is skewed to polar residues; that stretch reads EESSPHTSNC.

It belongs to the ISF1/MBR1 family.

Could influence the NAM7/UPF1 function, possibly at the level of mRNA turnover. Participates in mitochondrial biogenesis. This chain is Increasing suppression factor 1 (ISF1), found in Saccharomyces cerevisiae (strain JAY291) (Baker's yeast).